The chain runs to 324 residues: ATP synthase subunit a 2 (324 aa).

The first 33 residues, 1-33 (MKRVNVFRSGVFSRLFALLLPFLLGINGLVYAS), serve as a signal peptide directing secretion. 6 helical membrane passes run 95–115 (HVVM…LVGN), 157–177 (LPYL…GLVP), 179–199 (GATA…TFFI), 224–244 (ALWI…PFAL), 257–277 (IVIL…VAMF), and 291–311 (IFVA…FIGL).

The protein belongs to the ATPase A chain family. In terms of assembly, F-type ATPases have 2 components, CF(1) - the catalytic core - and CF(0) - the membrane proton channel. CF(1) has five subunits: alpha(3), beta(3), gamma(1), delta(1), epsilon(1). CF(0) has four main subunits: a, b, b' and c.

It localises to the cell inner membrane. Functionally, key component of the proton channel; it plays a direct role in the translocation of protons across the membrane. The polypeptide is ATP synthase subunit a 2 (Prosthecochloris aestuarii (strain DSM 271 / SK 413)).